A 71-amino-acid chain; its full sequence is MKKTFYHYMMKHRAALFSNEISNLAEAMYDDLSFPKQSEDYDEISSYLELSGMLASMSIFDEAWELYIQDR.

Belongs to the UPF0346 family.

This chain is UPF0346 protein BCE_2336, found in Bacillus cereus (strain ATCC 10987 / NRS 248).